We begin with the raw amino-acid sequence, 472 residues long: Divinyl ether synthase CYP74 (472 aa).

Cys-425 is a heme binding site.

This sequence belongs to the cytochrome P450 family. Heme is required as a cofactor. Expressed mainly in bulbs, and at lower levels in roots.

The catalysed reaction is (13S)-hydroperoxy-(9Z,11E)-octadecadienoate = etheroleate + H2O. It catalyses the reaction (13S)-hydroperoxy-(9Z,11E,15Z)-octadecatrienoate = etherolenate + H2O. The enzyme catalyses (9S)-hydroperoxy-(10E,12Z)-octadecadienoate = colneleate + H2O. It carries out the reaction (9S)-hydroperoxy-(10E,12Z,15Z)-octadecatrienoate = colnelenate + H2O. The protein operates within lipid metabolism; oxylipin biosynthesis. Functionally, divinyl ether synthase involved in oxylipin biosynthesis. Catalyzes the conversion of (13S)-hydroperoxy-(9Z,11E)-octadecadienoate (13-HPOD) to etheroleate and (13S)-hydroperoxy-(9Z,11E,15Z)-octadecatrienoate (13-HPOT) to etherolenate. Catalyzes the conversion of (9S)-hydroperoxy-(10E,12Z)-octadecadienoate (9-HPOD) to colneleate and (9S)-hydroperoxy-(10E,12Z,15Z)-octadecatrienoate (9-HPOT) colnelenate. This is Divinyl ether synthase CYP74 from Allium sativum (Garlic).